Here is a 426-residue protein sequence, read N- to C-terminus: MRLSKYYIPTLKETPTDVSVTSHVYSLRSGLIRQVASGIYAWLPLGLKVLKNIENVIKEEMNKSGILEVLMPLIQPASLWQESGRYNDYGSEMLRIKDRNNREMVFGPTHEEVVTDLLRTTLTSYKNLPLILYQVQWKFRDELRPRYGIMRCREFLMKDAYSFDKDFNSAIESYNLMFKVYIQIFRRLGLTPIAVKADSGPIGGNLSHEFHILANSGESTLYYDQDIINLINNDNIDIEKIKNTYTAADDLHNSETCPIPASNIKTSKGIEIGHIFYLGDKYSKTMNAAFSQNNETQLLHMGCYGIGVSRLVGAIIEVSHDNNGIIWPEEIAPFKFSLVNVFSANKECRNISENLYAKLDSNDVLYDDTEDSTGIKFSRMDLLGMPWQVIIGKTTIEHGLIEVRQRSSKKSLLMSTEQFLNNFKKS.

Belongs to the class-II aminoacyl-tRNA synthetase family. ProS type 2 subfamily. Homodimer.

It is found in the cytoplasm. It catalyses the reaction tRNA(Pro) + L-proline + ATP = L-prolyl-tRNA(Pro) + AMP + diphosphate. Functionally, catalyzes the attachment of proline to tRNA(Pro) in a two-step reaction: proline is first activated by ATP to form Pro-AMP and then transferred to the acceptor end of tRNA(Pro). The protein is Proline--tRNA ligase of Ehrlichia ruminantium (strain Gardel).